Here is a 269-residue protein sequence, read N- to C-terminus: D-aminoacyl-tRNA deacylase (269 aa).

This sequence belongs to the DtdA deacylase family. Monomer. Requires Zn(2+) as cofactor.

The catalysed reaction is a D-aminoacyl-tRNA + H2O = a tRNA + a D-alpha-amino acid + H(+). It catalyses the reaction glycyl-tRNA(Ala) + H2O = tRNA(Ala) + glycine + H(+). Functionally, D-aminoacyl-tRNA deacylase with broad substrate specificity. By recycling D-aminoacyl-tRNA to D-amino acids and free tRNA molecules, this enzyme counteracts the toxicity associated with the formation of D-aminoacyl-tRNA entities in vivo. The chain is D-aminoacyl-tRNA deacylase from Caldivirga maquilingensis (strain ATCC 700844 / DSM 13496 / JCM 10307 / IC-167).